The chain runs to 80 residues: MKLTCMMIVAVMFLTASIFITADNSRNGIENLPRMRRHEMKKPKASKLNKRVCIADDMPCGFGLFGGPLCCSGWCLFVCL.

An N-terminal signal peptide occupies residues Met-1 to Ala-22. Positions Asp-23–Arg-51 are excised as a propeptide. Disulfide bonds link Cys-53–Cys-71, Cys-60–Cys-75, and Cys-70–Cys-79.

This sequence belongs to the conotoxin O1 superfamily. As to expression, expressed by the venom duct.

It is found in the secreted. Functionally, omega-conotoxins act at presynaptic membranes, they bind and block voltage-gated calcium channels (Cav). This Conus imperialis (Imperial cone) protein is Omega-conotoxin-like 2/7.